Consider the following 29-residue polypeptide: Trypsin inhibitor 3 (29 aa).

Disulfide bonds link C3-C20, C10-C22, and C16-C28.

The protein belongs to the protease inhibitor I7 (squash-type serine protease inhibitor) family.

The protein localises to the secreted. Its function is as follows. Strongly inhibits trypsin, weakly inhibits chymotrypsin. In Cyclanthera pedata (Achocha), this protein is Trypsin inhibitor 3.